We begin with the raw amino-acid sequence, 549 residues long: CTP synthase (549 aa).

The interval 1 to 267 (MTKFVFVTGG…AAQVLSLLNL (267 aa)) is amidoligase domain. Ser-13 contacts CTP. Residue Ser-13 participates in UTP binding. Residues 14 to 19 (SIGKGI) and Asp-71 each bind ATP. Residues Asp-71 and Glu-141 each coordinate Mg(2+). CTP is bound by residues 148 to 150 (DIE), 188 to 193 (KTKPTQ), and Lys-224. UTP is bound by residues 188–193 (KTKPTQ) and Lys-224. In terms of domain architecture, Glutamine amidotransferase type-1 spans 292 to 534 (EIAIVGKYVR…VQAARTHSSD (243 aa)). Gly-354 is a binding site for L-glutamine. The active-site Nucleophile; for glutamine hydrolysis is Cys-381. Residues 382–385 (LGMQ), Glu-405, and Arg-462 contribute to the L-glutamine site. Active-site residues include His-507 and Glu-509.

It belongs to the CTP synthase family. In terms of assembly, homotetramer.

It carries out the reaction UTP + L-glutamine + ATP + H2O = CTP + L-glutamate + ADP + phosphate + 2 H(+). The catalysed reaction is L-glutamine + H2O = L-glutamate + NH4(+). It catalyses the reaction UTP + NH4(+) + ATP = CTP + ADP + phosphate + 2 H(+). It participates in pyrimidine metabolism; CTP biosynthesis via de novo pathway; CTP from UDP: step 2/2. With respect to regulation, allosterically activated by GTP, when glutamine is the substrate; GTP has no effect on the reaction when ammonia is the substrate. The allosteric effector GTP functions by stabilizing the protein conformation that binds the tetrahedral intermediate(s) formed during glutamine hydrolysis. Inhibited by the product CTP, via allosteric rather than competitive inhibition. Catalyzes the ATP-dependent amination of UTP to CTP with either L-glutamine or ammonia as the source of nitrogen. Regulates intracellular CTP levels through interactions with the four ribonucleotide triphosphates. This is CTP synthase from Cyanothece sp. (strain PCC 7425 / ATCC 29141).